We begin with the raw amino-acid sequence, 256 residues long: Thiazole synthase (256 aa).

Residue K96 is the Schiff-base intermediate with DXP of the active site. 1-deoxy-D-xylulose 5-phosphate is bound by residues G157, 183 to 184, and 205 to 206; these read AG and NT.

It belongs to the ThiG family. As to quaternary structure, homotetramer. Forms heterodimers with either ThiH or ThiS.

Its subcellular location is the cytoplasm. It catalyses the reaction [ThiS sulfur-carrier protein]-C-terminal-Gly-aminoethanethioate + 2-iminoacetate + 1-deoxy-D-xylulose 5-phosphate = [ThiS sulfur-carrier protein]-C-terminal Gly-Gly + 2-[(2R,5Z)-2-carboxy-4-methylthiazol-5(2H)-ylidene]ethyl phosphate + 2 H2O + H(+). It functions in the pathway cofactor biosynthesis; thiamine diphosphate biosynthesis. Catalyzes the rearrangement of 1-deoxy-D-xylulose 5-phosphate (DXP) to produce the thiazole phosphate moiety of thiamine. Sulfur is provided by the thiocarboxylate moiety of the carrier protein ThiS. In vitro, sulfur can be provided by H(2)S. This chain is Thiazole synthase, found in Bacillus cereus (strain ATCC 10987 / NRS 248).